The primary structure comprises 360 residues: MPLVAHTRLPTFERLKQEGQTVLSEDYAFQQDIRELHIGFLNMMPDAALAATERQFLRLVNESNLIAQFHIHPFTLGTLPRGDKAQAHIAQYYDKFEDLQEQGLDALIITGANPAAPHLEDEPFWDGLCEVVAWAQENVTSTLCSCLASHALVQHLWGIRRRPLGFKRWGVYSHAVTMPEHPLVNDLNTRFDVPHSRFNQIDREPLEAVGVQVLVESTEAGVHMAVSPDLFRMVFMQGHPEYDTVSLLKEYRREVTRWFDGTRADYPPFPQNYLRPKAKAILNEYRLEQEKAKRLGKPLPDFPEKLLLPMLHNTWCDTAKVFYSNWIGKVYQLTNNDRRKPFMEGVNPDDPLGLRQQLGI.

Residue C146 is the Acyl-thioester intermediate of the active site. 2 residues coordinate substrate: K167 and S196. The active-site Proton acceptor is the H239. The active site involves E241. R253 provides a ligand contact to substrate.

This sequence belongs to the MetA family.

The protein resides in the cytoplasm. The catalysed reaction is L-homoserine + succinyl-CoA = O-succinyl-L-homoserine + CoA. It functions in the pathway amino-acid biosynthesis; L-methionine biosynthesis via de novo pathway; O-succinyl-L-homoserine from L-homoserine: step 1/1. Its function is as follows. Transfers a succinyl group from succinyl-CoA to L-homoserine, forming succinyl-L-homoserine. In vitro, can also use glutaryl-CoA as acyl donor. This Thiothrix nivea (strain ATCC 35100 / DSM 5205 / JP2) protein is Homoserine O-succinyltransferase.